The following is a 309-amino-acid chain: Glutaminase (309 aa).

Substrate-binding residues include S65, N117, E162, N169, Y193, Y245, and V263.

Belongs to the glutaminase family. As to quaternary structure, homotetramer.

It carries out the reaction L-glutamine + H2O = L-glutamate + NH4(+). This chain is Glutaminase, found in Clostridioides difficile (strain 630) (Peptoclostridium difficile).